We begin with the raw amino-acid sequence, 828 residues long: Nitrogen permease regulator 3 (828 aa).

An N-terminal signal peptide occupies residues 1 to 21; it reads MSRNLPNPSLVGILFVVSTHS. Over residues 49 to 59 the composition is skewed to basic and acidic residues; it reads EDGMQHLVRDD. Disordered stretches follow at residues 49–87, 127–207, and 644–688; these read EDGMQHLVRDDKDDDDDDELYEYNEDEDPESGDLLFFDK, RRAT…PHSA, and EKSQ…FDTD. Residues 60-79 show a composition bias toward acidic residues; sequence KDDDDDDELYEYNEDEDPES. The segment covering 127-136 has biased composition (basic residues); the sequence is RRATPHKYNH. 2 stretches are compositionally biased toward basic and acidic residues: residues 139 to 151 and 169 to 203; these read LSTEHPKRNEHSQ and NYQKQKGQQEGREKKDKDKEKEKEKDAEEKGDVSE. Composition is skewed to polar residues over residues 645–668 and 675–684; these read KSQTTDNTSKTMAVQESPHNNDIT and ISNNRNNGSD.

Belongs to the NPR3 family.

Mediates inactivation of the TORC1 complex in response to amino acid starvation. Required for meiotic nuclear division. This chain is Nitrogen permease regulator 3 (NPR3), found in Lodderomyces elongisporus (strain ATCC 11503 / CBS 2605 / JCM 1781 / NBRC 1676 / NRRL YB-4239) (Yeast).